A 269-amino-acid chain; its full sequence is 5'-nucleotidase SurE (269 aa).

A divalent metal cation contacts are provided by D11, D12, S43, and N101.

Belongs to the SurE nucleotidase family. The cofactor is a divalent metal cation.

Its subcellular location is the cytoplasm. The catalysed reaction is a ribonucleoside 5'-phosphate + H2O = a ribonucleoside + phosphate. Its function is as follows. Nucleotidase that shows phosphatase activity on nucleoside 5'-monophosphates. This is 5'-nucleotidase SurE from Prochlorococcus marinus (strain MIT 9301).